Consider the following 268-residue polypeptide: Small ribosomal subunit protein mS43 (268 aa).

The transit peptide at 1 to 23 (MLNTGLRKGLALSPITHLLKRCS) directs the protein to the mitochondrion.

This sequence belongs to the mitochondrion-specific ribosomal protein mS43 family. In terms of assembly, component of the mitochondrial small ribosomal subunit (mt-SSU). Mature yeast 74S mitochondrial ribosomes consist of a small (37S) and a large (54S) subunit. The 37S small subunit contains a 15S ribosomal RNA (15S mt-rRNA) and at least 32 different proteins. The 54S large subunit contains a 21S rRNA (21S mt-rRNA) and at least 45 different proteins. mS43 forms a dimer with mS42, building a large protuberance adjacent to the mRNA channel exit in the mt-SSU body.

Its subcellular location is the mitochondrion. Functionally, component of the mitochondrial ribosome (mitoribosome), a dedicated translation machinery responsible for the synthesis of mitochondrial genome-encoded proteins, including at least some of the essential transmembrane subunits of the mitochondrial respiratory chain. The mitoribosomes are attached to the mitochondrial inner membrane and translation products are cotranslationally integrated into the membrane. In Schizosaccharomyces pombe (strain 972 / ATCC 24843) (Fission yeast), this protein is Small ribosomal subunit protein mS43.